Consider the following 205-residue polypeptide: Guanylate kinase (205 aa).

The Guanylate kinase-like domain occupies 18-196; it reads PKLFTISAPA…AYQVLRSIFI (179 aa). Position 25 to 32 (25 to 32) interacts with ATP; that stretch reads APAGAGKT.

This sequence belongs to the guanylate kinase family.

It localises to the cytoplasm. The enzyme catalyses GMP + ATP = GDP + ADP. Essential for recycling GMP and indirectly, cGMP. The sequence is that of Guanylate kinase (gmk) from Chlamydia muridarum (strain MoPn / Nigg).